We begin with the raw amino-acid sequence, 855 residues long: Spindle and centriole-associated protein 1 (855 aa).

The disordered stretch occupies residues 164-200 (QALNDVDGEEEGTVTSQSGESENENELDNSLNSQSNT). Residue threonine 235 is modified to Phosphothreonine. Over residues 300 to 311 (KPNLHALSKPKK) the composition is skewed to basic residues. Positions 300–328 (KPNLHALSKPKKNMLSGSTTSADLPNRTN) are disordered. Over residues 314-328 (LSGSTTSADLPNRTN) the composition is skewed to polar residues. Positions 325-437 (NRTNSNLDVL…TQARLRQYMV (113 aa)) form a coiled coil. A phosphoserine mark is found at serine 640 and serine 644. Residues 725–751 (GSMEERIAELNRQSMEARGKLLQLIEQ) adopt a coiled-coil conformation. Serine 760, serine 764, and serine 819 each carry phosphoserine. Residues 789-834 (EAPESSKCSTVSPVSEINTRRSSGATSNSCSPLNATSGSGRFTPLN) are disordered. Positions 794-828 (SKCSTVSPVSEINTRRSSGATSNSCSPLNATSGSG) are enriched in polar residues.

In terms of assembly, interacts with CEP120.

The protein resides in the cytoplasm. Its subcellular location is the cytoskeleton. It is found in the microtubule organizing center. It localises to the centrosome. The protein localises to the centriole. The protein resides in the spindle. Functionally, regulator required for centriole duplication, for proper bipolar spindle formation and chromosome congression in mitosis. The sequence is that of Spindle and centriole-associated protein 1 (SPICE1) from Pongo abelii (Sumatran orangutan).